The following is a 378-amino-acid chain: Glutamate 5-kinase (378 aa).

ATP is bound at residue Lys-14. The substrate site is built by Ser-54, Asp-141, and Asn-153. 173–174 lines the ATP pocket; the sequence is SD. The 78-residue stretch at 279-356 folds into the PUA domain; it reads AGRLTVDAGA…DEISAILGYD (78 aa).

The protein belongs to the glutamate 5-kinase family.

The protein resides in the cytoplasm. The enzyme catalyses L-glutamate + ATP = L-glutamyl 5-phosphate + ADP. It functions in the pathway amino-acid biosynthesis; L-proline biosynthesis; L-glutamate 5-semialdehyde from L-glutamate: step 1/2. Catalyzes the transfer of a phosphate group to glutamate to form L-glutamate 5-phosphate. This Brucella canis (strain ATCC 23365 / NCTC 10854 / RM-666) protein is Glutamate 5-kinase.